We begin with the raw amino-acid sequence, 131 residues long: Small ribosomal subunit protein uS19 (131 aa).

This sequence belongs to the universal ribosomal protein uS19 family.

In terms of biological role, protein S19 forms a complex with S13 that binds strongly to the 16S ribosomal RNA. This chain is Small ribosomal subunit protein uS19, found in Cenarchaeum symbiosum (strain A).